The primary structure comprises 261 residues: Methyl-coenzyme M reductase subunit gamma (261 aa).

Arginine 123 provides a ligand contact to coenzyme M.

The protein belongs to the methyl-coenzyme M reductase gamma subunit family. MCR is a hexamer of two alpha, two beta, and two gamma chains, forming a dimer of heterotrimers. The cofactor is coenzyme F430.

It is found in the cytoplasm. It carries out the reaction coenzyme B + methyl-coenzyme M = methane + coenzyme M-coenzyme B heterodisulfide. The protein operates within one-carbon metabolism; methyl-coenzyme M reduction; methane from methyl-coenzyme M: step 1/1. Functionally, component of the methyl-coenzyme M reductase (MCR) I that catalyzes the reductive cleavage of methyl-coenzyme M (CoM-S-CH3 or 2-(methylthio)ethanesulfonate) using coenzyme B (CoB or 7-mercaptoheptanoylthreonine phosphate) as reductant which results in the production of methane and the mixed heterodisulfide of CoB and CoM (CoM-S-S-CoB). This is the final step in methanogenesis. The polypeptide is Methyl-coenzyme M reductase subunit gamma (mcrG) (Methanococcus voltae).